A 485-amino-acid polypeptide reads, in one-letter code: Iroquois-class homeodomain protein IRX-4 (485 aa).

Residues 142–203 constitute a DNA-binding region (homeobox; TALE-type); that stretch reads GTRRKNATRE…NARRRLKKEN (62 aa). The disordered stretch occupies residues 206 to 313; the sequence is TWPPRNKCSD…EEEEAAERAR (108 aa). Positions 221–232 are enriched in acidic residues; the sequence is EEEEEEEEECSQ. A compositionally biased stretch (basic and acidic residues) spans 234–253; it reads DAMKSEKAEEPTGKEEKELE. Acidic residues predominate over residues 254-269; it reads LSDLEDLDAAESESSE. Positions 282-294 are enriched in pro residues; that stretch reads HPLPGGGPPPRAA.

Belongs to the TALE/IRO homeobox family. Ventricles of the heart, developing feather buds, retina, hindbrain.

It localises to the nucleus. Regulates the chamber-specific expression of myosin isoforms by activating the expression of the ventricle myosin heavy chain-1 (Vmhc1) and suppressing the expression of the atrial myosin heavy chain-1 (Amhc1) in the ventricles. May play a critical role in establishing chamber-specific gene expression in the developing heart. In Gallus gallus (Chicken), this protein is Iroquois-class homeodomain protein IRX-4 (IRX4).